Consider the following 497-residue polypeptide: 3-octaprenyl-4-hydroxybenzoate carboxy-lyase (497 aa).

Asn-175 contacts Mn(2+). Residues 178 to 180, 192 to 194, and 197 to 198 contribute to the prenylated FMN site; these read IYR, RWL, and RG. Mn(2+) is bound at residue Glu-241. Residue Asp-290 is the Proton donor of the active site.

The protein belongs to the UbiD family. In terms of assembly, homohexamer. The cofactor is prenylated FMN. Mn(2+) is required as a cofactor.

It localises to the cell membrane. The enzyme catalyses a 4-hydroxy-3-(all-trans-polyprenyl)benzoate + H(+) = a 2-(all-trans-polyprenyl)phenol + CO2. The protein operates within cofactor biosynthesis; ubiquinone biosynthesis. Catalyzes the decarboxylation of 3-octaprenyl-4-hydroxy benzoate to 2-octaprenylphenol, an intermediate step in ubiquinone biosynthesis. The protein is 3-octaprenyl-4-hydroxybenzoate carboxy-lyase of Shigella sonnei (strain Ss046).